The following is a 799-amino-acid chain: Cadherin-8 (799 aa).

The N-terminal stretch at 1 to 29 (MPERLAEMLLDLWTPLIILWITLPPCIYM) is a signal peptide. Positions 30-61 (APMNQSQVLMSGSPLELNSLGEEQRILNRSKR) are excised as a propeptide. Residues Asn33 and Asn57 are each glycosylated (N-linked (GlcNAc...) asparagine). 5 consecutive Cadherin domains span residues 62–167 (GWVW…APEF), 168–276 (LNGP…PPKF), 277–391 (AQSL…PPVF), 392–494 (SSPT…DNAP), and 495–616 (EFAS…YVLP). Residues 62 to 621 (GWVWNQMFVL…AYVLPIGLSM (560 aa)) are Extracellular-facing. A glycan (N-linked (GlcNAc...) asparagine) is linked at Asn188. Asn463, Asn473, and Asn544 each carry an N-linked (GlcNAc...) asparagine glycan. A helical membrane pass occupies residues 622-642 (GALIAILACIILLLVIVVLFV). At 643–799 (TLRRHKNEPL…YSVGESDKET (157 aa)) the chain is on the cytoplasmic side. Residue Ser795 is modified to Phosphoserine.

As to expression, mainly expressed in brain. Found in certain nerve cell lines, such as retinoblasts, glioma cells and neuroblasts.

It localises to the cell membrane. In terms of biological role, cadherins are calcium-dependent cell adhesion proteins. They preferentially interact with themselves in a homophilic manner in connecting cells; cadherins may thus contribute to the sorting of heterogeneous cell types. This chain is Cadherin-8 (CDH8), found in Homo sapiens (Human).